The primary structure comprises 207 residues: Small ribosomal subunit protein uS4c (207 aa).

The S4 RNA-binding domain maps to 92–156; it reads MRLDNILFRL…YQSIITKRIE (65 aa).

The protein belongs to the universal ribosomal protein uS4 family. As to quaternary structure, part of the 30S ribosomal subunit. Contacts protein S5. The interaction surface between S4 and S5 is involved in control of translational fidelity.

The protein resides in the plastid. The protein localises to the chloroplast. One of the primary rRNA binding proteins, it binds directly to 16S rRNA where it nucleates assembly of the body of the 30S subunit. Functionally, with S5 and S12 plays an important role in translational accuracy. The polypeptide is Small ribosomal subunit protein uS4c (rps4) (Equisetum arvense (Field horsetail)).